The primary structure comprises 315 residues: MSESLRIIFAGTPDFAARHLDALLSSGHNVVGVFTQPDRPAGRGKKLMPSPVKVLAEEKGLPVFQPVSLRPQENQQLVADLQADVMVVVAYGLILPKAVLEMPRLGCINVHGSLLPRWRGAAPIQRSLWAGDAETGVTIMQMDVGLDTGDMLYKLSSPITAEDTSGTLYDKLAELGPQGLITTLKQLADGTAKPEVQDETLVTYAEKLSKEEARIDWSLSAAQLERCIRAFNPWPMSWLEIEGQPVKVWKASVIDTVTKSAPGTILEASKQGIQVATGDGILNLLSLQPAGKKAMSAQDLLNSRREWFVPGNRLA.

(6S)-5,6,7,8-tetrahydrofolate is bound at residue 113 to 116 (SLLP).

This sequence belongs to the Fmt family.

It catalyses the reaction L-methionyl-tRNA(fMet) + (6R)-10-formyltetrahydrofolate = N-formyl-L-methionyl-tRNA(fMet) + (6S)-5,6,7,8-tetrahydrofolate + H(+). Functionally, attaches a formyl group to the free amino group of methionyl-tRNA(fMet). The formyl group appears to play a dual role in the initiator identity of N-formylmethionyl-tRNA by promoting its recognition by IF2 and preventing the misappropriation of this tRNA by the elongation apparatus. The polypeptide is Methionyl-tRNA formyltransferase (Escherichia coli (strain SMS-3-5 / SECEC)).